The following is a 578-amino-acid chain: Zinc finger-containing ubiquitin peptidase 1 (578 aa).

The segment at 2-24 (LSCDICGETVTSEPDMKAHLIVH) adopts a C2H2-type 1 zinc-finger fold. Residues 29-52 (IVCPFCKLSGVSYDEMCFHIETAH) form a C2H2-type 2; atypical zinc finger. 2 C2H2-type zinc fingers span residues 154-177 (PECP…KTTH) and 193-215 (YDCP…VDLH). Residues 226-248 (DRVQCSGDLQLAHQLQQEEDRKR) form an MIU region. The zUBD/ZHA stretch occupies residues 249–274 (RSEESRQEIEEFQKLQRQYGLDNSGG). K262 is modified (N6-acetyllysine). The active-site Nucleophile is C360. H491 functions as the Proton acceptor in the catalytic mechanism. D512 is an active-site residue.

The protein belongs to the peptidase C78 family. ZUFSP subfamily. In terms of assembly, interacts with RPA1 and RPA2.

It is found in the cytoplasm. Its subcellular location is the nucleus. It catalyses the reaction Thiol-dependent hydrolysis of ester, thioester, amide, peptide and isopeptide bonds formed by the C-terminal Gly of ubiquitin (a 76-residue protein attached to proteins as an intracellular targeting signal).. Deubiquitinase with endodeubiquitinase activity that specifically interacts with and cleaves 'Lys-63'-linked long polyubiquitin chains. Shows only weak activity against 'Lys-11' and 'Lys-48'-linked chains. Plays an important role in genome stability pathways, functioning to prevent spontaneous DNA damage and also promote cellular survival in response to exogenous DNA damage. Modulates the ubiquitination status of replication protein A (RPA) complex proteins in response to replication stress. In Macaca fascicularis (Crab-eating macaque), this protein is Zinc finger-containing ubiquitin peptidase 1.